A 465-amino-acid polypeptide reads, in one-letter code: Ribulose bisphosphate carboxylase large chain (465 aa).

Lys-4 carries the N6,N6,N6-trimethyllysine modification. Substrate is bound by residues Asn-113 and Thr-163. Lys-165 (proton acceptor) is an active-site residue. Residue Lys-167 coordinates substrate. Positions 191, 193, and 194 each coordinate Mg(2+). Lys-191 bears the N6-carboxylysine mark. Residue His-284 is the Proton acceptor of the active site. Arg-285, His-317, and Ser-369 together coordinate substrate.

It belongs to the RuBisCO large chain family. Type I subfamily. In terms of assembly, heterohexadecamer of 8 large chains and 8 small chains; disulfide-linked. The disulfide link is formed within the large subunit homodimers. It depends on Mg(2+) as a cofactor. The disulfide bond which can form in the large chain dimeric partners within the hexadecamer appears to be associated with oxidative stress and protein turnover.

It localises to the plastid. The protein localises to the chloroplast. The catalysed reaction is 2 (2R)-3-phosphoglycerate + 2 H(+) = D-ribulose 1,5-bisphosphate + CO2 + H2O. The enzyme catalyses D-ribulose 1,5-bisphosphate + O2 = 2-phosphoglycolate + (2R)-3-phosphoglycerate + 2 H(+). In terms of biological role, ruBisCO catalyzes two reactions: the carboxylation of D-ribulose 1,5-bisphosphate, the primary event in carbon dioxide fixation, as well as the oxidative fragmentation of the pentose substrate in the photorespiration process. Both reactions occur simultaneously and in competition at the same active site. In Morella cerifera (Wax myrtle), this protein is Ribulose bisphosphate carboxylase large chain.